The following is an 803-amino-acid chain: Cation channel sperm-associated auxiliary subunit delta (803 aa).

An N-terminal signal peptide occupies residues 1-15; it reads MLMLMLAAVATVVRA. Over 16–720 the chain is Extracellular; that stretch reads QTVCRFRTVR…ALPVAEFRPM (705 aa). 7 disulfides stabilise this stretch: Cys-19-Cys-365, Cys-55-Cys-142, Cys-141-Cys-148, Cys-383-Cys-492, Cys-506-Cys-698, Cys-521-Cys-568, and Cys-620-Cys-648. N-linked (GlcNAc...) asparagine glycans are attached at residues Asn-226, Asn-418, Asn-436, Asn-468, Asn-534, Asn-545, and Asn-626. A helical transmembrane segment spans residues 721–742; that stretch reads TSILLMVTVTLFTMWLAYAIPK. Residues 743 to 803 are Cytoplasmic-facing; the sequence is QLRTERGRRL…QIGKKPDIKK (61 aa). Residues 782–803 form a disordered region; it reads SRRVKDQPEKIPQIGKKPDIKK.

It belongs to the CATSPERD family. As to quaternary structure, component of the CatSper complex or CatSpermasome composed of the core pore-forming members CATSPER1, CATSPER2, CATSPER3 and CATSPER4 as well as auxiliary members CATSPERB, CATSPERG, CATSPERD, CATSPERE, CATSPERZ, C2CD6/CATSPERT, SLCO6C1, TMEM249, TMEM262 and EFCAB9. HSPA1 may be an additional auxiliary complex member. The core complex members CATSPER1, CATSPER2, CATSPER3 and CATSPER4 form a heterotetrameric channel. The auxiliary CATSPERB, CATSPERG, CATSPERD and CATSPERE subunits form a pavilion-like structure over the pore which stabilizes the complex through interactions with CATSPER4, CATSPER3, CATSPER1 and CATSPER2 respectively. SLCO6C1 interacts with CATSPERE and TMEM262/CATSPERH interacts with CATSPERB, further stabilizing the complex. C2CD6/CATSPERT interacts at least with CATSPERD and is required for targeting the CatSper complex in the flagellar membrane.

Its subcellular location is the cell projection. The protein resides in the cilium. It is found in the flagellum membrane. Functionally, auxiliary component of the CatSper complex, a complex involved in sperm cell hyperactivation. Sperm cell hyperactivation is needed for sperm motility which is essential late in the preparation of sperm for fertilization. Required for CATSPER1 stability before intraflagellar transport and/or incorporation of the CatSper complex channel into the flagellar membrane. The protein is Cation channel sperm-associated auxiliary subunit delta of Rattus norvegicus (Rat).